The following is a 155-amino-acid chain: Transcriptional repressor NrdR (155 aa).

The segment at 3-34 (CPFCGNIDTQVKDSRPAEDHVSIRRRRFCPAC) is a zinc-finger region. The ATP-cone domain occupies 49–139 (LVVIKSSGKR…VYKNFQAADD (91 aa)).

It belongs to the NrdR family. The cofactor is Zn(2+).

Negatively regulates transcription of bacterial ribonucleotide reductase nrd genes and operons by binding to NrdR-boxes. In Cereibacter sphaeroides (strain ATCC 17025 / ATH 2.4.3) (Rhodobacter sphaeroides), this protein is Transcriptional repressor NrdR.